A 116-amino-acid chain; its full sequence is Large ribosomal subunit protein bL19 (116 aa).

The protein belongs to the bacterial ribosomal protein bL19 family.

Its function is as follows. This protein is located at the 30S-50S ribosomal subunit interface and may play a role in the structure and function of the aminoacyl-tRNA binding site. The sequence is that of Large ribosomal subunit protein bL19 from Roseiflexus castenholzii (strain DSM 13941 / HLO8).